The chain runs to 325 residues: Glutarate 2-hydroxylase (325 aa).

3 residues coordinate Fe cation: H160, D162, and H292.

It belongs to the glutarate hydroxylase family. Homotetramer. Requires Fe(2+) as cofactor.

It carries out the reaction glutarate + 2-oxoglutarate + O2 = (S)-2-hydroxyglutarate + succinate + CO2. It functions in the pathway amino-acid degradation. Acts as an alpha-ketoglutarate-dependent dioxygenase catalyzing hydroxylation of glutarate (GA) to L-2-hydroxyglutarate (L2HG). Functions in a L-lysine degradation pathway that proceeds via cadaverine, glutarate and L-2-hydroxyglutarate. The chain is Glutarate 2-hydroxylase from Escherichia coli O7:K1 (strain IAI39 / ExPEC).